Reading from the N-terminus, the 170-residue chain is Heat shock protein beta-7 (170 aa).

The segment at methionine 1–proline 39 is disordered. The tract at residues methionine 1–glycine 71 is required for localization to SC35 splicing speckles. Residues histidine 16 to serine 31 show a composition bias toward low complexity. In terms of domain architecture, sHSP spans proline 62–isoleucine 170.

Belongs to the small heat shock protein (HSP20) family. As to quaternary structure, interacts with C-terminal domain of actin-binding protein 280. As to expression, isoform 1 is highly expressed in adult and fetal heart, skeletal muscle, and at a much lower levels in adipose tissue and in aorta. Undetectable in other tissues. Isoform 2 and isoform 3 are poorly detected in heart.

It is found in the cytoplasm. The protein localises to the nucleus. Its subcellular location is the cajal body. This is Heat shock protein beta-7 (HSPB7) from Homo sapiens (Human).